The primary structure comprises 350 residues: Neuronal-specific septin-3 (350 aa).

The segment covering 1 to 10 has biased composition (basic and acidic residues); the sequence is MSKGLPEART. The interval 1–29 is disordered; that stretch reads MSKGLPEARTDAAMSELVPEPRPKPAVPM. Residues 58-331 enclose the Septin-type G domain; sequence TGFDFNIMVV…ETYRAKRLND (274 aa). The interval 68–75 is G1 motif; it reads GQSGLGKS. 68–75 provides a ligand contact to GTP; that stretch reads GQSGLGKS. Serine 91 bears the Phosphoserine mark. Residue threonine 102 coordinates GTP. A G3 motif region spans residues 125–128; the sequence is DTPG. Residues 207-210 form a G4 motif region; it reads AKAD. GTP is bound by residues 208–216, glycine 265, and arginine 280; that span reads KADTMTLEE. Residues 328–350 form a disordered region; the sequence is RLNDNGGLPPVSVDTEESHDSNP.

This sequence belongs to the TRAFAC class TrmE-Era-EngA-EngB-Septin-like GTPase superfamily. Septin GTPase family. As to quaternary structure, septins polymerize into heterooligomeric protein complexes that form filaments, and can associate with cellular membranes, actin filaments and microtubules. GTPase activity is required for filament formation. In terms of processing, phosphorylated by PKG on serine residues. Phosphorylated by PKG on Ser-91. In terms of tissue distribution, expressed in the brain including the cerebrum, hippocampus and cerebellum (at protein level).

It localises to the cytoplasm. The protein localises to the cytoskeleton. The protein resides in the synapse. Filament-forming cytoskeletal GTPase. May play a role in cytokinesis (Potential). The chain is Neuronal-specific septin-3 from Mus musculus (Mouse).